A 367-amino-acid polypeptide reads, in one-letter code: Embryonic developmental protein tofu-6 (367 aa).

An RRM domain is found at 13–92 (AGFHIRNIPK…FTLKVTDHKN (80 aa)). Positions 298-345 (KSILADRLQRKGVCEYLPRSQQPHYAYSRETLLQHNNSGVTAQISNDA) are required for ife-3 interaction.

In terms of assembly, component of the pid-1 variant of the PETISCO complex (also called the pid-3, erh-2, tofu-6, and ife-3 small RNA complex) containing at least pid-1, tofu-6, ife-3, pid-3, and erh-2, which is required for the biogenesis of 21 nucleotide PIWI-interacting RNAs (piRNAs) that possess a uracil residue at the 5'-end (also called 21U-RNAs). Within the pid-1 variant of the PETISCO complex interacts with pid-1. Component of the tost-1 variant of the PETISCO complex (also called the pid-3, erh-2, tofu-6, and ife-3 small RNA complex) containing at least tost-1, tofu-6, ife-3, pid-3, and erh-2, which plays an essential role in embryogenesis. Within the tost-1 variant of the PETISCO complex interacts with tost-1. Within the pid-1 and tost-1 variants of the PETISCO complexes interacts (via C-terminus) with ife-3. Within the pid-1 and tost-1 variants of the PETISCO complexes interacts (via the RRM domain) with pid-3. Within the pid-1 and tost-1 variants of the PETISCO complexes interacts (via the RRM domain) with erh-2. In contrast to the pid-1 variant of the PETISCO complex, the tost-1 variant of the PETISCO complex plays a minor role in the biogenesis of 21U-RNAs. Interacts (via residues 120-314) with the PUCH complex subunit tofu-1 (via residues 82-172); the interaction between the PETISCO and PUCH complex members enhances piRNA production in vivo. As to expression, expression is restricted to the germline (at protein level).

The protein localises to the cytoplasm. The protein resides in the perinuclear region. It is found in the nucleus. Component of the pid-1 and tost-1 variants of the PETISCO complexes, which have roles in the biogenesis of a class of 21 nucleotide PIWI-interacting RNAs (piRNAs) that possess a uracil residue at the 5'-end (also called 21U-RNAs) and embryogenesis, respectively. Promotes the biogenesis of 21U-RNAs. Mediates the interaction between the PETISCO complex and the PUCH complex, the endoribonuclease complex processing the 5'-end of precursor piRNAs, thereby enhancing mature piRNA production. Required for chromosome segregation and cell division in early embryos. May have a role in DNA replication. This Caenorhabditis elegans protein is Embryonic developmental protein tofu-6.